Consider the following 241-residue polypeptide: Ribose-5-phosphate isomerase A (241 aa).

Substrate is bound by residues Thr-28–Thr-31, Asp-83–Asp-86, and Lys-96–Gly-99. Catalysis depends on Glu-105, which acts as the Proton acceptor. Lys-123 contacts substrate.

The protein belongs to the ribose 5-phosphate isomerase family. Homodimer.

The catalysed reaction is aldehydo-D-ribose 5-phosphate = D-ribulose 5-phosphate. It functions in the pathway carbohydrate degradation; pentose phosphate pathway; D-ribose 5-phosphate from D-ribulose 5-phosphate (non-oxidative stage): step 1/1. Functionally, catalyzes the reversible conversion of ribose-5-phosphate to ribulose 5-phosphate. The protein is Ribose-5-phosphate isomerase A of Bradyrhizobium diazoefficiens (strain JCM 10833 / BCRC 13528 / IAM 13628 / NBRC 14792 / USDA 110).